The following is a 240-amino-acid chain: uncharacterized protein (240 aa).

Disordered stretches follow at residues Glu-99–Leu-121 and Ala-136–His-167. A compositionally biased stretch (polar residues) spans Thr-137–Ser-155.

This is an uncharacterized protein from Ictaluridae (bullhead catfishes).